The chain runs to 321 residues: Lipoyl synthase (321 aa).

Positions 68, 73, 79, 94, 98, 101, and 308 each coordinate [4Fe-4S] cluster. The 218-residue stretch at 80–297 (FNHGTATFMI…KEVALELGFT (218 aa)) folds into the Radical SAM core domain.

Belongs to the radical SAM superfamily. Lipoyl synthase family. The cofactor is [4Fe-4S] cluster.

It localises to the cytoplasm. The catalysed reaction is [[Fe-S] cluster scaffold protein carrying a second [4Fe-4S](2+) cluster] + N(6)-octanoyl-L-lysyl-[protein] + 2 oxidized [2Fe-2S]-[ferredoxin] + 2 S-adenosyl-L-methionine + 4 H(+) = [[Fe-S] cluster scaffold protein] + N(6)-[(R)-dihydrolipoyl]-L-lysyl-[protein] + 4 Fe(3+) + 2 hydrogen sulfide + 2 5'-deoxyadenosine + 2 L-methionine + 2 reduced [2Fe-2S]-[ferredoxin]. The protein operates within protein modification; protein lipoylation via endogenous pathway; protein N(6)-(lipoyl)lysine from octanoyl-[acyl-carrier-protein]: step 2/2. In terms of biological role, catalyzes the radical-mediated insertion of two sulfur atoms into the C-6 and C-8 positions of the octanoyl moiety bound to the lipoyl domains of lipoate-dependent enzymes, thereby converting the octanoylated domains into lipoylated derivatives. This Vibrio cholerae serotype O1 (strain ATCC 39315 / El Tor Inaba N16961) protein is Lipoyl synthase.